The following is a 367-amino-acid chain: (E)-2-epi-beta-caryophyllene synthase (367 aa).

Residues Asp93, Asn234, and Ser238 each contribute to the Mg(2+) site. Residues 93-97 (DDIAE) carry the DDXXE motif motif.

The protein belongs to the terpene synthase family. The cofactor is Mg(2+). Mn(2+) is required as a cofactor.

It catalyses the reaction (2E,6E)-farnesyl diphosphate = (E)-2-epi-beta-caryophyllene + diphosphate. The protein operates within secondary metabolite biosynthesis; terpenoid biosynthesis. In terms of biological role, sesquiterpene synthase converting farnesyl diphosphate to (E)-2-epi-beta-caryophyllene as the major product, and to two other unidentified sesquiterpenes. Has no diterpene synthase activity. The chain is (E)-2-epi-beta-caryophyllene synthase from Selaginella moellendorffii (Spikemoss).